Reading from the N-terminus, the 314-residue chain is Olfactory receptor 1 (314 aa).

Residues 1-29 (MTERNQTVISQFLLLGLPIPPEHQHVFYA) lie on the Extracellular side of the membrane. N-linked (GlcNAc...) asparagine glycosylation occurs at Asn-5. A helical membrane pass occupies residues 30–50 (LFLSMYLTTVLGNLIIIILIL). The Cytoplasmic portion of the chain corresponds to 51 to 59 (LDSHLHTPM). A helical membrane pass occupies residues 60 to 81 (YLFLSNLSFSDLCFSSVTMPKL). The Extracellular segment spans residues 82-97 (LQNMQSQVPSIPYAGC). An intrachain disulfide couples Cys-97 to Cys-179. Residues 98-118 (LSQIYFFLFFGDLGNFLLVAM) traverse the membrane as a helical segment. Topologically, residues 119–143 (AYDRYVAICFPLHYMSIMSPKLCVS) are cytoplasmic. The helical transmembrane segment at 144 to 164 (LVVLSWVLTTFHAMLHTLLMA) threads the bilayer. Residues 165 to 196 (RLSFCEDNVIPHFFCDMSALLKLACSDTRVNE) are Extracellular-facing. A helical membrane pass occupies residues 197–217 (VVIFIVVSLFLVLPFALIIMS). Residues 218 to 240 (YVRIVSSILKVPSSQGIYKAFST) lie on the Cytoplasmic side of the membrane. The chain crosses the membrane as a helical span at residues 241–261 (CGSHLSVVSLFYGTVIGLYLC). Residues 262–271 (PSSNNSTVKE) lie on the Extracellular side of the membrane. N-linked (GlcNAc...) asparagine glycosylation is found at Asn-265 and Asn-266. The helical transmembrane segment at 272–292 (TVMSLMYTVVTPMLNPFIYSL) threads the bilayer. Topologically, residues 293 to 314 (RNRDIKGAMERIFCKRKIQLNL) are cytoplasmic.

Belongs to the G-protein coupled receptor 1 family. In terms of tissue distribution, olfactory epithelium.

It localises to the cell membrane. In terms of biological role, odorant receptor. Activated by a lily-derived aldehyde as well as other odorants. May signal through an inositol 1,4,5-trisphosphate (IP3) second messenger system. The polypeptide is Olfactory receptor 1 (Rattus norvegicus (Rat)).